The chain runs to 185 residues: Ribosome-recycling factor (185 aa).

Belongs to the RRF family.

Its subcellular location is the cytoplasm. Its function is as follows. Responsible for the release of ribosomes from messenger RNA at the termination of protein biosynthesis. May increase the efficiency of translation by recycling ribosomes from one round of translation to another. The chain is Ribosome-recycling factor from Macrococcus caseolyticus (strain JCSC5402) (Macrococcoides caseolyticum).